Consider the following 202-residue polypeptide: uncharacterized protein (202 aa).

2 disordered regions span residues 1–32 (MRPEGVSRGRASSVSISMCPPPPNGARRASLG) and 46–95 (PSSV…PSYT). Low complexity predominate over residues 47 to 79 (SSVSLSSSSSRRSMPSLGSSRSSSLPSTGSLRS).

This is an uncharacterized protein from Equus caballus (Horse).